Here is a 38-residue protein sequence, read N- to C-terminus: uncharacterized protein (38 aa).

This is an uncharacterized protein from Acidianus two-tailed virus (ATV).